The following is a 968-amino-acid chain: RNA polymerase-associated protein RapA (968 aa).

One can recognise a Helicase ATP-binding domain in the interval 164-334 (DVGRRHAPRV…FARLRLLDPS (171 aa)). ATP is bound at residue 177 to 184 (DEVGLGKT). The DEAH box signature appears at 280–283 (DEAH). Positions 490–644 (RVEWLMGHLT…TCPTGRAIYD (155 aa)) constitute a Helicase C-terminal domain.

The protein belongs to the SNF2/RAD54 helicase family. RapA subfamily. As to quaternary structure, interacts with the RNAP. Has a higher affinity for the core RNAP than for the holoenzyme. Its ATPase activity is stimulated by binding to RNAP.

Its function is as follows. Transcription regulator that activates transcription by stimulating RNA polymerase (RNAP) recycling in case of stress conditions such as supercoiled DNA or high salt concentrations. Probably acts by releasing the RNAP, when it is trapped or immobilized on tightly supercoiled DNA. Does not activate transcription on linear DNA. Probably not involved in DNA repair. This is RNA polymerase-associated protein RapA from Citrobacter koseri (strain ATCC BAA-895 / CDC 4225-83 / SGSC4696).